Here is a 162-residue protein sequence, read N- to C-terminus: Transmembrane protein 92 (162 aa).

The signal sequence occupies residues 1–22; that stretch reads MLDTWVWGTLTLTFGLLSSLQG. At 23 to 63 the chain is on the extracellular side; the sequence is VSFNETANTCDILNCPKGFTCCVKECCPERKVWDPANDRFR. The chain crosses the membrane as a helical span at residues 64-84; that stretch reads FLVILACIIFPILFICALVSL. The Cytoplasmic portion of the chain corresponds to 85-162; it reads FCPNCTELQH…QMRGRAYATL (78 aa). Residues 134–162 form a disordered region; it reads TPPTEPPPPYSLRPEGPAGQMRGRAYATL.

Its subcellular location is the membrane. In Mus musculus (Mouse), this protein is Transmembrane protein 92 (Tmem92).